A 310-amino-acid polypeptide reads, in one-letter code: Aspartate carbamoyltransferase catalytic subunit (310 aa).

Carbamoyl phosphate is bound by residues R57 and T58. Residue K86 coordinates L-aspartate. Carbamoyl phosphate contacts are provided by R107, H135, and Q138. L-aspartate is bound by residues R168 and R229. 2 residues coordinate carbamoyl phosphate: L268 and P269.

This sequence belongs to the aspartate/ornithine carbamoyltransferase superfamily. ATCase family. As to quaternary structure, heterooligomer of catalytic and regulatory chains.

The enzyme catalyses carbamoyl phosphate + L-aspartate = N-carbamoyl-L-aspartate + phosphate + H(+). Its pathway is pyrimidine metabolism; UMP biosynthesis via de novo pathway; (S)-dihydroorotate from bicarbonate: step 2/3. Catalyzes the condensation of carbamoyl phosphate and aspartate to form carbamoyl aspartate and inorganic phosphate, the committed step in the de novo pyrimidine nucleotide biosynthesis pathway. This is Aspartate carbamoyltransferase catalytic subunit from Thermococcus kodakarensis (strain ATCC BAA-918 / JCM 12380 / KOD1) (Pyrococcus kodakaraensis (strain KOD1)).